The primary structure comprises 892 residues: UPF0182 protein MCA2716 (892 aa).

The next 7 helical transmembrane spans lie at 7–27, 57–77, 107–127, 163–183, 206–226, 252–272, and 281–301; these read LLTS…AIVL, ILSG…FWAA, GALP…ALPF, ILVL…VMVA, IHLN…YVLQ, LPLI…ALWF, and LALT…IDVV.

Belongs to the UPF0182 family.

Its subcellular location is the cell membrane. In Methylococcus capsulatus (strain ATCC 33009 / NCIMB 11132 / Bath), this protein is UPF0182 protein MCA2716.